A 112-amino-acid chain; its full sequence is ATP synthase epsilon chain (112 aa).

Belongs to the ATPase epsilon chain family. In terms of assembly, F-type ATPases have 2 components, CF(1) - the catalytic core - and CF(0) - the membrane proton channel. CF(1) has five subunits: alpha(3), beta(3), gamma(1), delta(1), epsilon(1). CF(0) has three main subunits: a, b and c.

It is found in the cell inner membrane. Its function is as follows. Produces ATP from ADP in the presence of a proton gradient across the membrane. This Rickettsia rickettsii (strain Sheila Smith) protein is ATP synthase epsilon chain.